The following is a 519-amino-acid chain: Glutamate--cysteine ligase (519 aa).

Belongs to the glutamate--cysteine ligase type 1 family. Type 1 subfamily.

The catalysed reaction is L-cysteine + L-glutamate + ATP = gamma-L-glutamyl-L-cysteine + ADP + phosphate + H(+). The protein operates within sulfur metabolism; glutathione biosynthesis; glutathione from L-cysteine and L-glutamate: step 1/2. The protein is Glutamate--cysteine ligase of Erwinia tasmaniensis (strain DSM 17950 / CFBP 7177 / CIP 109463 / NCPPB 4357 / Et1/99).